Reading from the N-terminus, the 754-residue chain is MEINPYLMFLNNDVTSLISTTYPYTGPPPMSHGSSTKYTLETIKRTYDYSRTSVEKTSKVFNIPRRKFCNCLEDKDELVKPTGNVDISSLLGLAEMMEKRMGEGFFKHCVMEAETEILKMHFSRLTEGRQTYDWTSERNMPAATALQLTVDAIKETEGPFKGTTMLEYCNKMIEMLDWKEIKFKKVKTVVRREKDKRSGKEIKTKVPVMGIDSIKHDEFLIRALTINTMAKDGERGKLQRRAIATPGMIVRPFSKIVETVAQKICEKLKESGLPVGGNEKKAKLKTTVTSLNARMNSDQFAVNITGDNSKWNECQQPEAYLALLAYITKDSSDLMKDLCSVAPVLFCNKFVKLGQGIRLSNKRKTKEVIIKAEKMGKYKNLMREEYKNLFEPLEKYIQKDVCFLPGGMLMGMFNMLSTVLGVSTLCYMDEELKAKGCFWTGLQSSDDFVLFAVASNWSNIHWTIRRFNAVCKLIGINMSLEKSYGSLPELFEFTSMFFDGEFVSNLAMELPAFTTAGVNEGVDFTAAMSIIKTNMINNSLSPSTALMALRICLQEFRATYRVHPWDSRVKGGRMKIINEFIKTIENKDGLLIADGGKLMNNISTLHIPEEVLKFEKMDEQYRNRVFNPKNPFTNFDKTIDIFRAHGPIRVEENEAVVSTHSFRTRANRTLLNTDMRAMMAEEKRYQMVCDMFKSVFESADINPPIGAMSIGEAIEEKLLERAKMKRDIGAIEDSEYEEIKDIIRDAKKARLESR.

Short sequence motifs (nuclear localization signal) lie at residues 189-197 (VVRREKDKR) and 205-218 (KVPVMGIDSIKHDE). Residues 251-258 (RPFSKIVE) form a promoter-binding site region. A RdRp catalytic domain is found at 288–484 (VTSLNARMNS…GINMSLEKSY (197 aa)).

This sequence belongs to the influenza viruses polymerase PB1 family. In terms of assembly, influenza RNA polymerase is composed of three subunits: PB1, PB2 and PA. Interacts (via N-terminus) with PA (via C-terminus). Interacts (via C-terminus) with PB2 (via N-terminus); this interaction is essential for transcription initiation. In terms of processing, phosphorylated by host PRKCA.

It localises to the host nucleus. The protein localises to the host cytoplasm. It catalyses the reaction RNA(n) + a ribonucleoside 5'-triphosphate = RNA(n+1) + diphosphate. RNA-dependent RNA polymerase which is responsible for replication and transcription of virus RNA segments. The transcription of viral mRNAs occurs by a unique mechanism called cap-snatching. 5' methylated caps of cellular mRNAs are cleaved after 10-13 nucleotides by PA. In turn, these short capped RNAs are used as primers by PB1 for transcription of viral mRNAs. During virus replication, PB1 initiates RNA synthesis and copy vRNA into complementary RNA (cRNA) which in turn serves as a template for the production of more vRNAs. This is RNA-directed RNA polymerase catalytic subunit from Influenza C virus (strain C/Johannesburg/1/1966).